The following is a 142-amino-acid chain: Hemoglobin subunit alpha-A (142 aa).

The Globin domain maps to 2-142; sequence VLSPTDKSIV…VSTVLTSKYR (141 aa). Residue His-59 coordinates O2. Residue His-88 participates in heme b binding.

The protein belongs to the globin family. In terms of assembly, heterotetramer of two alpha chains and two beta chains. In terms of tissue distribution, red blood cells.

Its function is as follows. Involved in oxygen transport from the lung to the various peripheral tissues. This is Hemoglobin subunit alpha-A (HBAA) from Otolemur crassicaudatus (Brown greater galago).